The chain runs to 575 residues: MRVSQILNPTLREVPAEAEVVSHQLLVRAGLIRKSAAGIYTYLPLGLRVLRKIEQIVREEMDAKGGQEVLLPIIQPAELWRESGRWDLYGQELMRLNDRHNREFCLGPTHEEIITDLIRGEIRSYKQLPLLLYQIQNKYRDERRPRFGLMRGREFIMKDLYSFDRDEAGLAESYKKMYDAYTRIFTRCGLTFRPVEADAGAIGGTGGTHEFMVLAESGEAAVVYCPDCDYAANVEKAECKPAPVAGDAPVGAYRGVDTPGTKTIEQVAEFLKVSKSDLVKSLLYQGDDKLFLILVRGDREINEIKVNNALGPFINLQLAGPEVVLEKLGCEPGYVGPIGAPKNLTVVADLEVPLMAKAVCGANAEDKHYVDAVPEKDFRIDQILDLRMVNAGEPCPQCGSPLKEARGIEVGQVFKLGTKYSKALNAVFLDENGAEHPCVMGCYGIGVSRTMAAAIEQNNDKDGIIWPIPIAPYHVIVVPVNMKDDQVRETGEALYQELLKLGVEAVLDDRDERPGVKFKDADLVGYPLRVTVGSKTLANGEVELRDRKTGEVQLVKVEELAGRIQGMIREALGVK.

The protein belongs to the class-II aminoacyl-tRNA synthetase family. ProS type 1 subfamily. Homodimer.

It localises to the cytoplasm. It carries out the reaction tRNA(Pro) + L-proline + ATP = L-prolyl-tRNA(Pro) + AMP + diphosphate. Catalyzes the attachment of proline to tRNA(Pro) in a two-step reaction: proline is first activated by ATP to form Pro-AMP and then transferred to the acceptor end of tRNA(Pro). As ProRS can inadvertently accommodate and process non-cognate amino acids such as alanine and cysteine, to avoid such errors it has two additional distinct editing activities against alanine. One activity is designated as 'pretransfer' editing and involves the tRNA(Pro)-independent hydrolysis of activated Ala-AMP. The other activity is designated 'posttransfer' editing and involves deacylation of mischarged Ala-tRNA(Pro). The misacylated Cys-tRNA(Pro) is not edited by ProRS. This is Proline--tRNA ligase from Desulfitobacterium hafniense (strain DSM 10664 / DCB-2).